The chain runs to 743 residues: Dolichyl-phosphate-mannose--protein mannosyltransferase 5 (743 aa).

At Met-1–Lys-46 the chain is on the lumenal side. An N-linked (GlcNAc...) asparagine glycan is attached at Asn-33. The chain crosses the membrane as a helical span at residues Leu-47–Pro-67. Over Asn-68–Pro-129 the chain is Cytoplasmic. Residues Tyr-130–Leu-150 traverse the membrane as a helical segment. Over Thr-151–Lys-158 the chain is Lumenal. A helical membrane pass occupies residues Ile-159–Ser-179. Arg-180 is a topological domain (cytoplasmic). Residues Phe-181–Arg-201 form a helical membrane-spanning segment. The Lumenal segment spans residues Ser-202–Trp-231. Residue Asn-213 is glycosylated (N-linked (GlcNAc...) asparagine). Residues Ala-232–Ile-252 traverse the membrane as a helical segment. The Cytoplasmic segment spans residues Gly-253–Lys-264. Residues Tyr-265–Phe-285 form a helical membrane-spanning segment. At Ser-286–Ala-583 the chain is on the lumenal side. An MIR 1 domain is found at Val-320 to Ala-374. Asn-380 and Asn-386 each carry an N-linked (GlcNAc...) asparagine glycan. MIR domains are found at residues Phe-384 to Asp-444 and Gln-454 to Asn-510. The helical transmembrane segment at Val-584–Leu-604 threads the bilayer. Topologically, residues Leu-605 to His-623 are cytoplasmic. The chain crosses the membrane as a helical span at residues Tyr-624–Gly-644. At Gln-645–Lys-646 the chain is on the lumenal side. The helical transmembrane segment at Leu-647–Leu-667 threads the bilayer. The Cytoplasmic portion of the chain corresponds to Asp-668–Tyr-683. A helical transmembrane segment spans residues Ile-684–Ile-704. Topologically, residues Tyr-705–Ser-743 are lumenal.

It belongs to the glycosyltransferase 39 family. In terms of assembly, PMT3 and PMT5 form a functional heterodimer. Also forms a minor complex with PMT2.

It is found in the endoplasmic reticulum membrane. It carries out the reaction a di-trans,poly-cis-dolichyl beta-D-mannosyl phosphate + L-seryl-[protein] = 3-O-(alpha-D-mannosyl)-L-seryl-[protein] + a di-trans,poly-cis-dolichyl phosphate + H(+). The enzyme catalyses a di-trans,poly-cis-dolichyl beta-D-mannosyl phosphate + L-threonyl-[protein] = 3-O-(alpha-D-mannosyl)-L-threonyl-[protein] + a di-trans,poly-cis-dolichyl phosphate + H(+). Its pathway is protein modification; protein glycosylation. Functionally, protein O-mannosyltransferase involved in O-glycosylation which is essential for cell wall rigidity. Forms a heterodimeric complex with PMT3 and more rarely with PMT2 to transfer mannose from Dol-P-mannose to Ser or Thr residues on proteins. The protein is Dolichyl-phosphate-mannose--protein mannosyltransferase 5 of Saccharomyces cerevisiae (strain ATCC 204508 / S288c) (Baker's yeast).